Reading from the N-terminus, the 55-residue chain is Large ribosomal subunit protein bL33 (55 aa).

Belongs to the bacterial ribosomal protein bL33 family.

This is Large ribosomal subunit protein bL33 (rpmG) from Buchnera aphidicola subsp. Acyrthosiphon pisum (strain APS) (Acyrthosiphon pisum symbiotic bacterium).